Here is a 382-residue protein sequence, read N- to C-terminus: RNA exonuclease 3 (382 aa).

The Exonuclease domain occupies 223–369 (VLALDCEMAY…EDAIAAMDVV (147 aa)).

This sequence belongs to the REXO1/REXO3 family.

It localises to the cytoplasm. The protein localises to the nucleus. In terms of biological role, 3' to 5' exoribonuclease required for proper 3' end maturation of MRP RNA and of the U5L snRNA. The protein is RNA exonuclease 3 (REX3) of Eremothecium gossypii (strain ATCC 10895 / CBS 109.51 / FGSC 9923 / NRRL Y-1056) (Yeast).